The primary structure comprises 709 residues: Kelch-like protein 11 (709 aa).

An N-terminal signal peptide occupies residues 1–15 (MAAAVAAAAAAAAAA). Residues 95–171 (CDITLCFGGA…MYTGRIRVST (77 aa)) form the BTB domain. Residues 206-308 (CVAIHSLAHM…KPTYLTRHVK (103 aa)) enclose the BACK domain. 5 Kelch repeats span residues 361–408 (VIMV…ITES), 409–454 (YVYV…EVKG), 456–502 (LYSI…AIED), 504–557 (FVYI…VVNS), and 611–662 (DVFI…HVRI). S466 carries the post-translational modification Phosphoserine.

Homodimer. Interacts with CUL3. Component of a cullin-RING-based BCR (BTB-CUL3-RBX1) E3 ubiquitin-protein ligase complex.

In terms of biological role, component of a cullin-RING-based BCR (BTB-CUL3-RBX1) E3 ubiquitin-protein ligase complex that mediates the ubiquitination of target proteins, leading most often to their proteasomal degradation. The protein is Kelch-like protein 11 (Klhl11) of Mus musculus (Mouse).